The following is a 394-amino-acid chain: MSKEKFERTKPHVNVGTIGHVDHGKTTLTAAITTVLAKTYGGAARAFDQIDNAPEEKARGITINTSHVEYDTPTRHYAHVDCPGHADYVKNMITGAAQMDGAILVVAATDGPMPQTREHILLGRQVGVPYIIVFLNKCDMVDDEELLELVEMEVRELLSQYDFPGDDTPIVRGSALKALEGDAEWEAKILELAGFLDSYIPEPERAIDKPFLLPIEDVFSISGRGTVVTGRVERGIIKVGEEVEIVGIKETQKSTCTGVEMFRKLLDEGRAGENVGVLLRGIKREEIERGQVLAKPGTIKPHTKFESEVYILSKDEGGRHTPFFKGYRPQFYFRTTDVTGTIELPEGVEMVMPGDNIKMVVTLIHPIAMDDGLRFAIREGGRTVGAGVVAKVLG.

Residues 10-204 (KPHVNVGTIG…FLDSYIPEPE (195 aa)) enclose the tr-type G domain. The segment at 19–26 (GHVDHGKT) is G1. 19–26 (GHVDHGKT) provides a ligand contact to GTP. Residue T26 coordinates Mg(2+). Residues 60–64 (GITIN) form a G2 region. Residues 81–84 (DCPG) are G3. Residues 81–85 (DCPGH) and 136–139 (NKCD) each bind GTP. Residues 136–139 (NKCD) form a G4 region. Residues 174–176 (SAL) form a G5 region.

The protein belongs to the TRAFAC class translation factor GTPase superfamily. Classic translation factor GTPase family. EF-Tu/EF-1A subfamily. Monomer.

It localises to the cytoplasm. It carries out the reaction GTP + H2O = GDP + phosphate + H(+). In terms of biological role, GTP hydrolase that promotes the GTP-dependent binding of aminoacyl-tRNA to the A-site of ribosomes during protein biosynthesis. The sequence is that of Elongation factor Tu 1 from Shigella sonnei (strain Ss046).